The sequence spans 341 residues: UDP-3-O-acylglucosamine N-acyltransferase (341 aa).

His-255 acts as the Proton acceptor in catalysis.

It belongs to the transferase hexapeptide repeat family. LpxD subfamily. Homotrimer.

The catalysed reaction is a UDP-3-O-[(3R)-3-hydroxyacyl]-alpha-D-glucosamine + a (3R)-hydroxyacyl-[ACP] = a UDP-2-N,3-O-bis[(3R)-3-hydroxyacyl]-alpha-D-glucosamine + holo-[ACP] + H(+). Its pathway is bacterial outer membrane biogenesis; LPS lipid A biosynthesis. Catalyzes the N-acylation of UDP-3-O-acylglucosamine using 3-hydroxyacyl-ACP as the acyl donor. Is involved in the biosynthesis of lipid A, a phosphorylated glycolipid that anchors the lipopolysaccharide to the outer membrane of the cell. This Granulibacter bethesdensis (strain ATCC BAA-1260 / CGDNIH1) protein is UDP-3-O-acylglucosamine N-acyltransferase.